A 301-amino-acid polypeptide reads, in one-letter code: Phosphatidylglycerol--prolipoprotein diacylglyceryl transferase (301 aa).

A run of 3 helical transmembrane segments spans residues 17 to 37 (LAVRWYGLMYLVAFIAAIVVG), 59 to 79 (MLFYGVLGTILGGRLGYVLFY), and 97 to 117 (GGMSFHGGFLGVTLAMVLFAY). Position 142 (Arg-142) interacts with a 1,2-diacyl-sn-glycero-3-phospho-(1'-sn-glycerol). A run of 2 helical transmembrane segments spans residues 230–250 (MGAISAVFLIGYGLARFTVEF) and 265–285 (LSMGQWLSLPMILVGIGLLVW).

The protein belongs to the Lgt family.

The protein localises to the cell inner membrane. It catalyses the reaction L-cysteinyl-[prolipoprotein] + a 1,2-diacyl-sn-glycero-3-phospho-(1'-sn-glycerol) = an S-1,2-diacyl-sn-glyceryl-L-cysteinyl-[prolipoprotein] + sn-glycerol 1-phosphate + H(+). The protein operates within protein modification; lipoprotein biosynthesis (diacylglyceryl transfer). Its function is as follows. Catalyzes the transfer of the diacylglyceryl group from phosphatidylglycerol to the sulfhydryl group of the N-terminal cysteine of a prolipoprotein, the first step in the formation of mature lipoproteins. The sequence is that of Phosphatidylglycerol--prolipoprotein diacylglyceryl transferase from Paraburkholderia xenovorans (strain LB400).